Reading from the N-terminus, the 180-residue chain is Small ribosomal subunit protein uS5 (180 aa).

Positions 1–26 are disordered; the sequence is MAEEKDKKQSSRRRNNRRTEKESEWQ. Residues 17-26 are compositionally biased toward basic and acidic residues; that stretch reads RRTEKESEWQ. One can recognise an S5 DRBM domain in the interval 25–88; that stretch reads WQERVVQIRR…ADGKKHLVNV (64 aa).

It belongs to the universal ribosomal protein uS5 family. As to quaternary structure, part of the 30S ribosomal subunit. Contacts proteins S4 and S8.

Its function is as follows. With S4 and S12 plays an important role in translational accuracy. Located at the back of the 30S subunit body where it stabilizes the conformation of the head with respect to the body. This Synechococcus elongatus (strain ATCC 33912 / PCC 7942 / FACHB-805) (Anacystis nidulans R2) protein is Small ribosomal subunit protein uS5.